The chain runs to 380 residues: Lipid-A-disaccharide synthase (380 aa).

The protein belongs to the LpxB family.

It carries out the reaction a lipid X + a UDP-2-N,3-O-bis[(3R)-3-hydroxyacyl]-alpha-D-glucosamine = a lipid A disaccharide + UDP + H(+). The protein operates within bacterial outer membrane biogenesis; LPS lipid A biosynthesis. Functionally, condensation of UDP-2,3-diacylglucosamine and 2,3-diacylglucosamine-1-phosphate to form lipid A disaccharide, a precursor of lipid A, a phosphorylated glycolipid that anchors the lipopolysaccharide to the outer membrane of the cell. This Photobacterium profundum (strain SS9) protein is Lipid-A-disaccharide synthase.